The following is a 250-amino-acid chain: 5'/3'-nucleotidase SurE (250 aa).

Residues Asp-9, Asp-10, Ser-40, and Asn-93 each contribute to the a divalent metal cation site.

It belongs to the SurE nucleotidase family. Requires a divalent metal cation as cofactor.

The protein localises to the cytoplasm. The enzyme catalyses a ribonucleoside 5'-phosphate + H2O = a ribonucleoside + phosphate. The catalysed reaction is a ribonucleoside 3'-phosphate + H2O = a ribonucleoside + phosphate. It carries out the reaction [phosphate](n) + H2O = [phosphate](n-1) + phosphate + H(+). Functionally, nucleotidase with a broad substrate specificity as it can dephosphorylate various ribo- and deoxyribonucleoside 5'-monophosphates and ribonucleoside 3'-monophosphates with highest affinity to 3'-AMP. Also hydrolyzes polyphosphate (exopolyphosphatase activity) with the preference for short-chain-length substrates (P20-25). Might be involved in the regulation of dNTP and NTP pools, and in the turnover of 3'-mononucleotides produced by numerous intracellular RNases (T1, T2, and F) during the degradation of various RNAs. This chain is 5'/3'-nucleotidase SurE, found in Yersinia enterocolitica serotype O:8 / biotype 1B (strain NCTC 13174 / 8081).